The sequence spans 143 residues: Transcriptional regulator MraZ (143 aa).

SpoVT-AbrB domains lie at 5-47 and 76-119; these read EYFH…PVSA and ASNQ…DKEK.

It belongs to the MraZ family. Forms oligomers.

It is found in the cytoplasm. The protein localises to the nucleoid. The polypeptide is Transcriptional regulator MraZ (Finegoldia magna (strain ATCC 29328 / DSM 20472 / WAL 2508) (Peptostreptococcus magnus)).